The primary structure comprises 868 residues: Translation initiation factor IF-2 (868 aa).

Over residues 103–183 (RSELPETSDR…RQAAAERETV (81 aa)) the composition is skewed to basic and acidic residues. A disordered region spans residues 103–274 (RSELPETSDR…GRPMLMPEQK (172 aa)). Pro residues predominate over residues 190 to 207 (VAAPPIPRPAPEPRPPAR). Residues 213–254 (PKAEAPRAHPAERETEARGDKRSAGLSRKDEYRELQGDDFRK) show a composition bias toward basic and acidic residues. Positions 255–264 (GGGKRKKPKT) are enriched in basic residues. In terms of domain architecture, tr-type G spans 369 to 538 (PRPPVVTIMG…LVQAEVLELK (170 aa)). A G1 region spans residues 378-385 (GHVDHGKT). 378–385 (GHVDHGKT) contributes to the GTP binding site. A G2 region spans residues 403–407 (GITQH). Residues 424–427 (DTPG) are G3. Residues 424 to 428 (DTPGH) and 478 to 481 (NKMD) each bind GTP. Residues 478-481 (NKMD) are G4. Residues 514–516 (SAK) are G5.

Belongs to the TRAFAC class translation factor GTPase superfamily. Classic translation factor GTPase family. IF-2 subfamily.

It localises to the cytoplasm. One of the essential components for the initiation of protein synthesis. Protects formylmethionyl-tRNA from spontaneous hydrolysis and promotes its binding to the 30S ribosomal subunits. Also involved in the hydrolysis of GTP during the formation of the 70S ribosomal complex. The chain is Translation initiation factor IF-2 from Methylococcus capsulatus (strain ATCC 33009 / NCIMB 11132 / Bath).